The chain runs to 100 residues: Small ribosomal subunit protein uS14c (100 aa).

The protein belongs to the universal ribosomal protein uS14 family. As to quaternary structure, part of the 30S ribosomal subunit.

The protein resides in the plastid. Its subcellular location is the chloroplast. In terms of biological role, binds 16S rRNA, required for the assembly of 30S particles. The chain is Small ribosomal subunit protein uS14c from Arabis hirsuta (Hairy rock-cress).